The chain runs to 221 residues: UPF0319 protein CGSHiGG_02140 (221 aa).

A signal peptide spans Met-1–Ala-21.

The protein belongs to the UPF0319 family.

This is UPF0319 protein CGSHiGG_02140 from Haemophilus influenzae (strain PittGG).